A 700-amino-acid polypeptide reads, in one-letter code: Polyribonucleotide nucleotidyltransferase (700 aa).

Asp-485 and Asp-491 together coordinate Mg(2+). The KH domain occupies 552–611 (PRITVIKINPEKIRDVIGKGGAVIRALTEETGTTIELEDDGTVKIASSNGEATKEAIRRI). Residues 621–689 (GRIYNGKVIR…RQGRVRLSIK (69 aa)) form the S1 motif domain.

This sequence belongs to the polyribonucleotide nucleotidyltransferase family. In terms of assembly, component of the RNA degradosome, which is a multiprotein complex involved in RNA processing and mRNA degradation. Requires Mg(2+) as cofactor.

The protein resides in the cytoplasm. It catalyses the reaction RNA(n+1) + phosphate = RNA(n) + a ribonucleoside 5'-diphosphate. Involved in mRNA degradation. Catalyzes the phosphorolysis of single-stranded polyribonucleotides processively in the 3'- to 5'-direction. The chain is Polyribonucleotide nucleotidyltransferase from Shewanella baltica (strain OS155 / ATCC BAA-1091).